The following is a 451-amino-acid chain: MPPKNNQITYNIFKVDHRFALPRVRPKFPKFSELYLELLVNRSKVDPQLMNEPYVHRYDPVVSSGESMVNPVPPADDGRMVATTLKAVPRLSSVPNPSPAKPTQKPTISRESFVWESSASIDPSPRVQKKSRGRPASSTPSIEPESISRYRQVKRSIISSYYKQVGEGAPSTTRRAADSENERRPSEVREAPESRRRRETSETGSDKSKAPPPIKEIKKTFGNEENPLINVFEDYPQAKDEDDHKRELLFKFKRLRQTYPKVDIPDFTMLSNHETMKRTYDSTLRNLSIDSTVENYKSYLMMGFMACEMVLGKIGFDMEGYTQQQTLHMNKYEKLLVELGEKSYVPNSVNKWPVEVRLIGLMLFQTTIFIISKIIAKKTNVNLLQIYNNFSGLNEPPKVTRNGSSSGFASGTSSPLVFIPRTKRPSLVPSEKKMRGPSVTRDLAAEQERDA.

Disordered stretches follow at residues 89 to 150 (PRLS…ISRY) and 164 to 222 (QVGE…KTFG). Over residues 104–121 (QKPTISRESFVWESSASI) the composition is skewed to polar residues. A compositionally biased stretch (low complexity) spans 137–147 (SSTPSIEPESI). Over residues 175 to 222 (RAADSENERRPSEVREAPESRRRRETSETGSDKSKAPPPIKEIKKTFG) the composition is skewed to basic and acidic residues. The chain crosses the membrane as a helical span at residues 358-376 (LIGLMLFQTTIFIISKIIA). The interval 401–451 (RNGSSSGFASGTSSPLVFIPRTKRPSLVPSEKKMRGPSVTRDLAAEQERDA) is disordered. Residues 403 to 414 (GSSSGFASGTSS) show a composition bias toward low complexity.

The protein belongs to the IIV-6 067R family.

It is found in the membrane. This is an uncharacterized protein from Invertebrate iridescent virus 3 (IIV-3).